We begin with the raw amino-acid sequence, 162 residues long: Peroxiredoxin-2C (162 aa).

In terms of domain architecture, Thioredoxin spans 4 to 162 (ITVGDVVPDG…SSAEDILKAL (159 aa)). The active-site Cysteine sulfenic acid (-SOH) intermediate is the Cys51.

Belongs to the peroxiredoxin family. Prx5 subfamily. Monomer. As to expression, highly expressed in buds and flowers. Slightly expressed in green tissues. Also detected in pollen.

It localises to the cytoplasm. It catalyses the reaction [glutaredoxin]-dithiol + a hydroperoxide = [glutaredoxin]-disulfide + an alcohol + H2O. Its function is as follows. Thiol-specific peroxidase that catalyzes the reduction of hydrogen peroxide and organic hydroperoxides to water and alcohols, respectively. Plays a role in cell protection against oxidative stress by detoxifying peroxides and as sensor of hydrogen peroxide-mediated signaling events. The chain is Peroxiredoxin-2C (PRXIIC) from Arabidopsis thaliana (Mouse-ear cress).